Here is a 369-residue protein sequence, read N- to C-terminus: Chaperone protein DnaJ (369 aa).

In terms of domain architecture, J spans 7–73 (DYYEILGVPR…QKRAMYDRFG (67 aa)). Residues 143 to 225 (GAEIPVEYER…CGGSGRVLRK (83 aa)) form a CR-type zinc finger. Positions 156, 159, 173, 176, 199, 202, 213, and 216 each coordinate Zn(2+). CXXCXGXG motif repeat units lie at residues 156-163 (CPRCGGTG), 173-180 (CPSCGGTG), 199-206 (CERCGGTG), and 213-220 (CHECGGSG).

It belongs to the DnaJ family. In terms of assembly, homodimer. Requires Zn(2+) as cofactor.

It is found in the cytoplasm. Functionally, participates actively in the response to hyperosmotic and heat shock by preventing the aggregation of stress-denatured proteins and by disaggregating proteins, also in an autonomous, DnaK-independent fashion. Unfolded proteins bind initially to DnaJ; upon interaction with the DnaJ-bound protein, DnaK hydrolyzes its bound ATP, resulting in the formation of a stable complex. GrpE releases ADP from DnaK; ATP binding to DnaK triggers the release of the substrate protein, thus completing the reaction cycle. Several rounds of ATP-dependent interactions between DnaJ, DnaK and GrpE are required for fully efficient folding. Also involved, together with DnaK and GrpE, in the DNA replication of plasmids through activation of initiation proteins. This chain is Chaperone protein DnaJ, found in Thermotoga sp. (strain RQ2).